Reading from the N-terminus, the 311-residue chain is F-box protein At3g18320 (311 aa).

Residues 1-46 enclose the F-box domain; sequence MTLPELPKDLVEEILCFVPATSLKRLRSTCKGWNRLFKDDKRFARK.

The protein is F-box protein At3g18320 of Arabidopsis thaliana (Mouse-ear cress).